Consider the following 140-residue polypeptide: FAD synthase (140 aa).

Residues 9–10 (TF), 14–17 (HPGH), and aspartate 92 each bind ATP.

Belongs to the archaeal FAD synthase family. Homodimer. Requires a divalent metal cation as cofactor.

It catalyses the reaction FMN + ATP + H(+) = FAD + diphosphate. It functions in the pathway cofactor biosynthesis; FAD biosynthesis; FAD from FMN: step 1/1. In terms of biological role, catalyzes the transfer of the AMP portion of ATP to flavin mononucleotide (FMN) to produce flavin adenine dinucleotide (FAD) coenzyme. The sequence is that of FAD synthase from Natronomonas pharaonis (strain ATCC 35678 / DSM 2160 / CIP 103997 / JCM 8858 / NBRC 14720 / NCIMB 2260 / Gabara) (Halobacterium pharaonis).